A 362-amino-acid polypeptide reads, in one-letter code: Peptide chain release factor 1 (362 aa).

Gln-240 is modified (N5-methylglutamine).

This sequence belongs to the prokaryotic/mitochondrial release factor family. Post-translationally, methylated by PrmC. Methylation increases the termination efficiency of RF1.

Its subcellular location is the cytoplasm. Peptide chain release factor 1 directs the termination of translation in response to the peptide chain termination codons UAG and UAA. The sequence is that of Peptide chain release factor 1 from Bifidobacterium longum (strain DJO10A).